A 761-amino-acid chain; its full sequence is Zinc finger protein 287 (761 aa).

An SCAN box domain is found at 49-131; sequence RQNFRNFPYP…TLVEDLTQIL (83 aa). Residues 134-154 form a disordered region; that stretch reads EAPQNSTLSQDTPEEDPRGKH. Residues 170 to 238 enclose the KRAB domain; it reads MTFKDVAVDI…IKEILEGPSP (69 aa). 14 consecutive C2H2-type zinc fingers follow at residues 368-390, 396-418, 424-446, 452-474, 480-502, 508-530, 536-558, 564-586, 592-614, 620-642, 648-670, 676-698, 704-726, and 732-754; these read YKCNVCGKKFRKYPSLLKHQSTH, YECEECGKEFRHISSLIAHQRMH, YECHQCGKAFSQRAHLTIHQRIH, YKCDDCGKDFSQRAHLTIHQRTH, YKCLECGKTFSHSSSLINHQRVH, YICNECGKTFSQSTHLLQHQKIH, YKCNECWKVFSQSTYLIRHQRIH, YKCNECGKAFAHSSTLIQHQTTH, YICNICGKAFSQSANLTQHHRTH, YKCSVCGKAFSQSVHLTQHQRIH, FKCNICGKAYRQGANLTQHQRIH, YKCNECGKAFIYSSSLNQHQRTH, YKCNECDKDFSQRTCLIQHQRIH, and YACRICGKTFTQSTNLIQHQRVH.

It belongs to the krueppel C2H2-type zinc-finger protein family.

It is found in the nucleus. Its function is as follows. May be involved in transcriptional regulation. The sequence is that of Zinc finger protein 287 from Homo sapiens (Human).